The sequence spans 137 residues: Ribosome-binding factor A (137 aa).

The protein belongs to the RbfA family. As to quaternary structure, monomer. Binds 30S ribosomal subunits, but not 50S ribosomal subunits or 70S ribosomes.

Its subcellular location is the cytoplasm. Its function is as follows. One of several proteins that assist in the late maturation steps of the functional core of the 30S ribosomal subunit. Associates with free 30S ribosomal subunits (but not with 30S subunits that are part of 70S ribosomes or polysomes). Required for efficient processing of 16S rRNA. May interact with the 5'-terminal helix region of 16S rRNA. In Rhodopseudomonas palustris (strain BisB18), this protein is Ribosome-binding factor A.